A 194-amino-acid polypeptide reads, in one-letter code: Calcium channel flower (194 aa).

Helical transmembrane passes span Leu-34–Ile-54, Val-59–Glu-79, and Gly-107–Phe-127.

The protein belongs to the calcium channel flower family. Homomultimer. Associates with the dally/ magu complex.

It is found in the cell membrane. Its subcellular location is the cytoplasmic vesicle. It localises to the secretory vesicle. The protein resides in the synaptic vesicle membrane. The protein localises to the presynaptic cell membrane. It is found in the endosome. Its activity is regulated as follows. Channel activity is inhibited by La(3+), which reduces Ca(2+) influx and thus inhibits it's function in promoting activity-dependent bulk endocytosis (ADBE) in response to high stimuli. Its function is as follows. Transmembrane protein which mediates synaptic endocytosis, fitness-based cell culling, neuronal culling, morphogen gradient scaling, and calcium transport. Regulates synaptic endocytosis and hence couples exo- with endocytosis. Controls two major modes of synaptic vesicle (SV) endocytosis in the synaptic boutons of neuromuscular junctions (NMJs); Ca(2+) channel-independent Clathrin-mediated endocytosis (CME) in response to mild stimulation, and Ca(2+) channel-dependent activity-dependent bulk endocytosis (ADBE) in response to strong stimulation. Functions in ADBE and subsequent SV reformation from bulk endosomes by initiating Ca(2+) channel-dependent phosphatidylinositol 4,5-bisphosphate (PtdIns(4,5)P2) compartmentalization in synaptic boutons. There it acts at the periactive zone to provide the low Ca(2+) levels required to initiate Calcineurin activation and upregulate PtdIns(4,5)P2. Conversely PtdIns(4,5)P2 enhances fwe Ca(2+) channel-activity, establishing a positive feedback loop that induces PtdIns(4,5)P2 microdomain at the periactive zone. These microdomains trigger bulk membrane invagination (i.e. ADBE) by triggering actin polymerization while also promoting localization of fwe to bulk endosomes, thereby removing the ADBE trigger to reduce endocytosis and prevent excess membrane uptake. PtdIns(4,5)P2 then promotes SV reformation from the bulk endosomes, to coordinate ADBE and subsequent SV reformation. Different combinations of the flower isoforms at the cell membrane are also required for the identification and elimination of suboptimal or supernumerary cells during development, regeneration, and adulthood. Required for the recognition and elimination of unfit cells in the developing wing during cell competition. In the developing pupal retina, mediates the elimination of unwanted postmitotic neurons, including supernumerary photoreceptor neurons that form at the periphery of the retina and are contained within incomplete ommatidia units. Also required for efficient elimination and replacement of old neurons by newly generated neurons during regeneration in the adult brain following mechanical injury. Downstream of the flower fitness fingerprints, cells identified as unwanted or unfit are eliminated via apoptosis through the expression of ahuizotl (azot). However, the cells marked for elimination by the flower isoforms only undergo apoptosis if additional thresholds are met; (1) their neighboring fit/healthy cells express different levels of the fwe isoforms, and (2) the levels of the protective signal SPARC expressed by the loser or unwanted cells are unable to inhibit caspase activation. These additional thresholds for flower-mediated apoptosis, allows useful cells to recover from transient and limited stress before they are unnecessarily eliminated. Functions with dally and magu in a mechanism of scaling, which utilises apoptosis to ensure that the dpp morphogen gradient, which mediates organ growth, remains proportional to the size of the growing wing. In this mechanism, fwe represses dally- and Magu-dependent activity in expanding the gradient, and dally/Magu inhibits fwe-dependent apoptosis to keep cell death rate low. When the levels of these different proteins are optimally regulated the gradient correctly scales with organ growth but when this fails, fwe-mediated apoptosis is activated to trim the developing tissue to match the correct size of the gradient. This chain is Calcium channel flower, found in Drosophila erecta (Fruit fly).